We begin with the raw amino-acid sequence, 287 residues long: GTPase Era (287 aa).

In terms of domain architecture, Era-type G spans 11-174 (RSGFVAVIGR…RSYLASSLPE (164 aa)). GTP contacts are provided by residues 19-26 (GRTNVGKS) and 66-70 (DTPGI). The KH type-2 domain maps to 205 to 273 (LRDELPQALA…PLTLRVKVQR (69 aa)).

The protein belongs to the TRAFAC class TrmE-Era-EngA-EngB-Septin-like GTPase superfamily. Era GTPase family. In terms of assembly, monomer.

It is found in the cytoplasm. It localises to the cell membrane. Its function is as follows. An essential GTPase that binds both GDP and GTP, with rapid nucleotide exchange. Plays a role in 16S rRNA processing and 30S ribosomal subunit biogenesis and possibly also in cell cycle regulation and energy metabolism. The polypeptide is GTPase Era (Acidimicrobium ferrooxidans (strain DSM 10331 / JCM 15462 / NBRC 103882 / ICP)).